We begin with the raw amino-acid sequence, 652 residues long: Acetyl-coenzyme A synthetase (652 aa).

CoA is bound by residues 191-194 (RAGR), T311, and N335. Residues 387 to 389 (GEP), 411 to 416 (DTWWQT), D500, and R515 each bind ATP. S523 is a binding site for CoA. R526 contributes to the ATP binding site. Residues V537, H539, and I542 each contribute to the Mg(2+) site. CoA is bound at residue R584. N6-acetyllysine is present on K609.

It belongs to the ATP-dependent AMP-binding enzyme family. The cofactor is Mg(2+). Acetylated. Deacetylation by the SIR2-homolog deacetylase activates the enzyme.

It catalyses the reaction acetate + ATP + CoA = acetyl-CoA + AMP + diphosphate. Its function is as follows. Catalyzes the conversion of acetate into acetyl-CoA (AcCoA), an essential intermediate at the junction of anabolic and catabolic pathways. Acs undergoes a two-step reaction. In the first half reaction, Acs combines acetate with ATP to form acetyl-adenylate (AcAMP) intermediate. In the second half reaction, it can then transfer the acetyl group from AcAMP to the sulfhydryl group of CoA, forming the product AcCoA. Functionally, enables the cell to use acetate during aerobic growth to generate energy via the TCA cycle, and biosynthetic compounds via the glyoxylate shunt. Acetylates CheY, the response regulator involved in flagellar movement and chemotaxis. The chain is Acetyl-coenzyme A synthetase from Cronobacter sakazakii (strain ATCC BAA-894) (Enterobacter sakazakii).